Consider the following 61-residue polypeptide: MNAKFILLLLVVTTTMLLPDTQGAEVIKCRTPKDCADPCRKQTGCPHGKCMNRTCRCNRCG.

The N-terminal stretch at 1–23 is a signal peptide; that stretch reads MNAKFILLLLVVTTTMLLPDTQG. 4 disulfides stabilise this stretch: Cys29/Cys50, Cys35/Cys55, Cys39/Cys57, and Cys45/Cys60. Cys60 is modified (cysteine amide).

Belongs to the short scorpion toxin superfamily. Potassium channel inhibitor family. Alpha-KTx 06 subfamily. In terms of tissue distribution, expressed by the venom gland.

Its subcellular location is the secreted. Blocker of voltage-gated potassium channels. This is Potassium channel toxin alpha-KTx 6.7 from Opistophthalmus carinatus (African yellow leg scorpion).